Reading from the N-terminus, the 86-residue chain is Cytochrome c oxidase subunit 6B1 (86 aa).

A2 is subject to N-acetylalanine. Positions 27 to 73 (TRNCWQNYLDFHRCQKAMTAKGGDISVCEWYQRVYQSLCPTSWVTDW) constitute a CHCH domain. Residues 30–40 (CWQNYLDFHRC) carry the Cx9C motif motif. 2 cysteine pairs are disulfide-bonded: C30-C65 and C40-C54. Positions 54 to 65 (CEWYQRVYQSLC) match the Cx10C motif motif.

This sequence belongs to the cytochrome c oxidase subunit 6B family. Component of the cytochrome c oxidase (complex IV, CIV), a multisubunit enzyme composed of 14 subunits. The complex is composed of a catalytic core of 3 subunits MT-CO1, MT-CO2 and MT-CO3, encoded in the mitochondrial DNA, and 11 supernumerary subunits COX4I, COX5A, COX5B, COX6A, COX6B, COX6C, COX7A, COX7B, COX7C, COX8 and NDUFA4, which are encoded in the nuclear genome. The complex exists as a monomer or a dimer and forms supercomplexes (SCs) in the inner mitochondrial membrane with NADH-ubiquinone oxidoreductase (complex I, CI) and ubiquinol-cytochrome c oxidoreductase (cytochrome b-c1 complex, complex III, CIII), resulting in different assemblies (supercomplex SCI(1)III(2)IV(1) and megacomplex MCI(2)III(2)IV(2)).

It localises to the mitochondrion inner membrane. It participates in energy metabolism; oxidative phosphorylation. Its function is as follows. Component of the cytochrome c oxidase, the last enzyme in the mitochondrial electron transport chain which drives oxidative phosphorylation. The respiratory chain contains 3 multisubunit complexes succinate dehydrogenase (complex II, CII), ubiquinol-cytochrome c oxidoreductase (cytochrome b-c1 complex, complex III, CIII) and cytochrome c oxidase (complex IV, CIV), that cooperate to transfer electrons derived from NADH and succinate to molecular oxygen, creating an electrochemical gradient over the inner membrane that drives transmembrane transport and the ATP synthase. Cytochrome c oxidase is the component of the respiratory chain that catalyzes the reduction of oxygen to water. Electrons originating from reduced cytochrome c in the intermembrane space (IMS) are transferred via the dinuclear copper A center (CU(A)) of subunit 2 and heme A of subunit 1 to the active site in subunit 1, a binuclear center (BNC) formed by heme A3 and copper B (CU(B)). The BNC reduces molecular oxygen to 2 water molecules using 4 electrons from cytochrome c in the IMS and 4 protons from the mitochondrial matrix. The sequence is that of Cytochrome c oxidase subunit 6B1 (COX6B1) from Pongo abelii (Sumatran orangutan).